The chain runs to 193 residues: Superoxide dismutase [Fe] (193 aa).

Residues histidine 27, histidine 74, aspartate 157, and histidine 161 each contribute to the Fe cation site.

It belongs to the iron/manganese superoxide dismutase family. In terms of assembly, monomer. Requires Fe cation as cofactor.

The catalysed reaction is 2 superoxide + 2 H(+) = H2O2 + O2. Destroys superoxide anion radicals which are normally produced within the cells and which are toxic to biological systems. Involved in the metabolism of 4-aminophenol. May have an indirect role in hydroxyquinol metabolism by scavenging and detoxifying reactive species that promote its auto-oxidation. This chain is Superoxide dismutase [Fe], found in Burkholderia sp.